The sequence spans 103 residues: NADH-quinone oxidoreductase subunit K 1 (103 aa).

3 helical membrane-spanning segments follow: residues 7-27 (ISWF…GFLF), 31-51 (IITV…SFVT), and 63-83 (LFTF…LAII).

This sequence belongs to the complex I subunit 4L family. NDH-1 is composed of 14 different subunits. Subunits NuoA, H, J, K, L, M, N constitute the membrane sector of the complex.

Its subcellular location is the cell inner membrane. It carries out the reaction a quinone + NADH + 5 H(+)(in) = a quinol + NAD(+) + 4 H(+)(out). Its function is as follows. NDH-1 shuttles electrons from NADH, via FMN and iron-sulfur (Fe-S) centers, to quinones in the respiratory chain. The immediate electron acceptor for the enzyme in this species is believed to be ubiquinone. Couples the redox reaction to proton translocation (for every two electrons transferred, four hydrogen ions are translocated across the cytoplasmic membrane), and thus conserves the redox energy in a proton gradient. The chain is NADH-quinone oxidoreductase subunit K 1 from Solibacter usitatus (strain Ellin6076).